Here is a 1533-residue protein sequence, read N- to C-terminus: MGHSKQIRTLLLNEMEKLEKTLFRLEQGFELQFRLGPTLQGKAVTVYTNYPFPGETFNREKFHSLQWENPTEREDDSDKYCKLNLQQAGSFQYYFLQGNEKSGGGYIVVDPILRVGADNHVLPLDCVTLQTFLTKCLGPFDEWESRLRVAKESGYNMIHFTPLQTLGLSRSSYSLADQLELNPDFSRPNKKYTWHDVGQLVEKLKKEWDILCITDVVYNHTAANSKWIHEHPESAYNLVNSPHLKPAWVLDRALWHLSCDVAEGKYREKGVPALIENDHQMNCIRKIIWEDIYPKIHLWEFFQVDVHKAVEQFRGLLTQENRKIISQPDPKQHLKIIQDPEYRRLGCTVDMNIALATFIPHDNGPAAIDECCNWFRKRIEELNAEKHQLVNYHQEQAVNCLLGNVFYERLAGHGPKLGPVTRKHPLVTRYFTFPFEEMTPSTEESMIHLPNKACFLMAHNGWVMGDDPLRNFAEPGSDVYLRRELICWGDSVKLRYGNKPEDCPYLWAHMKKYTEITATHFQGVRLDNCHSTPIHVAEYMLDAARKLQPNLYVVAELFTGSEDLDNIFVTRLGISSLIREAMSAADSHEEGRLVYRYGGEPVGSFVQPCLRPLMPAIAHALFMDITHDNECPIVHRSAYDALPSSTIVSMASCASGSTKGYDELVPHQISVVSEERFYTKWNPEALPSNTGEVNFQSGIIAARRAINKLHQELGAKGFIQVYVDQVDQDIVAVTRHSPSIHQSVVSVSRTAFRNPKTSFYSKEVPHMYIPGKIEEVVLEARTIERHTIPYKKDENSINGMPDITVEIREHIQLNESKIVKHAGIVTKGPNEFVQEIEFENLTPGSVIIFRVSLDPHAQVAVGILRNHLTQFSPHFKSGSLAVDNADPILKIPFASIASKLTLAELNQVLYRCESEEQEDGGGCYNIPNWSSLKYAGLQGLMSILAEIRPRNDLGHPFCDNLRSGDWMIDYVSSRLISRSGTIAEVGKWLQAMFLYLKQIPRYLIPCYFDAILIGAYTTLLDIAWKQMSSFVQNGSTFVKHLSLGSVQMCGVGKFPSLPLLSPSLTDLPYRVNEITKEKEQCCGSLAAGLPHFSAGIFRCWGRDTFIALRGLLLVTGRYLEARNIILAFAGTLRHGLIPNLLGEGTHARYNCRDAVWWWLQCIQDYCKIVPNGLDILRCPVSRMYPTDDSVPLSAGTVDQPLFEVIQEAMQRHVQGIQFRERNAGPQIDRNMKDEGFNITAGVDEETGFVYGGNRFNCGTWMDKMGESDRARNRGIPATPRDGSAVEIVGLSKSAVRWLLELSRKNIFPYHEVRVKRHGKFVTVSYDEWNRKIQDNFEKLFHVSEDPSDFNEKHPELVHKRGIYKDSYGASSPWCDYQLRPNFTIAMVVAPELFTPEKAWKALEIAEKKLLGPLGMKTLDPDDMVYCGIYDNALDNDNYNLAKGFNYHQGPEWLWPTGYFLRAKLYFSKLMGPETNAKTMFLVKNVLSRHYVHLERSPWKGLPELTNENGQYCPFSCETQAWSIATVLETLYDL.

Serine 64 carries the phosphoserine modification. Active-site residues include aspartate 527, histidine 530, and aspartate 628.

Belongs to the glycogen debranching enzyme family. In terms of assembly, monomer. Interacts with NHLRC1/malin. In terms of processing, ubiquitinated. As to expression, ubiquitous. Expressed in striated skeletal muscle, heart, liver, spleen, skin, spinal cord, lung, kidney and testicle.

The protein localises to the cytoplasm. It catalyses the reaction Transfers a segment of a (1-&gt;4)-alpha-D-glucan to a new position in an acceptor, which may be glucose or a (1-&gt;4)-alpha-D-glucan.. The enzyme catalyses Hydrolysis of (1-&gt;6)-alpha-D-glucosidic branch linkages in glycogen phosphorylase limit dextrin.. Multifunctional enzyme acting as 1,4-alpha-D-glucan:1,4-alpha-D-glucan 4-alpha-D-glycosyltransferase and amylo-1,6-glucosidase in glycogen degradation. This chain is Glycogen debranching enzyme, found in Equus caballus (Horse).